The primary structure comprises 175 residues: Interleukin-10 (175 aa).

Positions 1–18 (MPSSALLYCLIFLAGVAA) are cleaved as a signal peptide. Cystine bridges form between Cys26/Cys122 and Cys76/Cys128. Asn130 carries N-linked (GlcNAc...) asparagine glycosylation.

Belongs to the IL-10 family. As to quaternary structure, homodimer. Interacts with IL10RA and IL10RB.

The protein resides in the secreted. Its function is as follows. Major immune regulatory cytokine that acts on many cells of the immune system where it has profound anti-inflammatory functions, limiting excessive tissue disruption caused by inflammation. Mechanistically, IL10 binds to its heterotetrameric receptor comprising IL10RA and IL10RB leading to JAK1 and STAT2-mediated phosphorylation of STAT3. In turn, STAT3 translocates to the nucleus where it drives expression of anti-inflammatory mediators. Targets antigen-presenting cells (APCs) such as macrophages and monocytes and inhibits their release of pro-inflammatory cytokines including granulocyte-macrophage colony-stimulating factor /GM-CSF, granulocyte colony-stimulating factor/G-CSF, IL-1 alpha, IL-1 beta, IL-6, IL-8 and TNF-alpha. Also interferes with antigen presentation by reducing the expression of MHC-class II and co-stimulatory molecules, thereby inhibiting their ability to induce T cell activation. In addition, controls the inflammatory response of macrophages by reprogramming essential metabolic pathways including mTOR signaling. In Sus scrofa (Pig), this protein is Interleukin-10 (IL10).